The chain runs to 570 residues: Conserved oligomeric Golgi complex subunit 8 (570 aa).

This sequence belongs to the COG8 family. As to quaternary structure, component of the conserved oligomeric Golgi complex which is composed of eight different subunits and is required for normal Golgi morphology and localization.

The protein resides in the golgi apparatus membrane. In terms of biological role, required for normal Golgi function. The sequence is that of Conserved oligomeric Golgi complex subunit 8 from Drosophila melanogaster (Fruit fly).